A 594-amino-acid polypeptide reads, in one-letter code: Probable methylenetetrahydrofolate reductase (NADH) (594 aa).

The active-site Proton donor/acceptor is E21. NAD(+) is bound by residues 21–26 (EYFPPK) and 52–53 (TW). FAD-binding positions include 52–53 (TW), H81, 111–113 (RGD), Y153, 157–160 (HPDA), D175, and K182. D113 provides a ligand contact to substrate. The substrate site is built by Q193 and Y285.

Belongs to the methylenetetrahydrofolate reductase family. Homodimer. It depends on FAD as a cofactor.

The catalysed reaction is (6S)-5-methyl-5,6,7,8-tetrahydrofolate + NAD(+) = (6R)-5,10-methylene-5,6,7,8-tetrahydrofolate + NADH + H(+). The protein operates within one-carbon metabolism; tetrahydrofolate interconversion. Plant MTHFRs strongly prefer NADH over NADPH. Not inhibited by methionine or S-adenosylmethionine. In terms of biological role, the probable reversibility of the MTHFR reaction in plants suggests that they can metabolize the methyl group of 5,10-methylenetetrahydrofolate to serine, sugars and starch. In Oryza sativa subsp. japonica (Rice), this protein is Probable methylenetetrahydrofolate reductase (NADH).